The primary structure comprises 126 residues: Large ribosomal subunit protein bL19 (126 aa).

This sequence belongs to the bacterial ribosomal protein bL19 family.

This protein is located at the 30S-50S ribosomal subunit interface and may play a role in the structure and function of the aminoacyl-tRNA binding site. The protein is Large ribosomal subunit protein bL19 of Dechloromonas aromatica (strain RCB).